Consider the following 64-residue polypeptide: Prokaryotic ubiquitin-like protein Pup (64 aa).

Residues 1 to 37 (MAQEQTKRGGGGGEDDDLTGSTAAGQERREKLTDETD) form a disordered region. Residues 21–58 (STAAGQERREKLTDETDDLLDEIDDVLEENAEDFVRAY) form an ARC ATPase binding region. A coiled-coil region spans residues 23–52 (AAGQERREKLTDETDDLLDEIDDVLEENAE). Glutamine 64 bears the Deamidated glutamine mark. Glutamine 64 participates in a covalent cross-link: Isoglutamyl lysine isopeptide (Gln-Lys) (interchain with K-? in acceptor proteins).

It belongs to the prokaryotic ubiquitin-like protein family. In terms of assembly, strongly interacts with the proteasome-associated ATPase ARC through a hydrophobic interface; the interacting region of Pup lies in its C-terminal half. There is one Pup binding site per ARC hexamer ring. Is modified by deamidation of its C-terminal glutamine to glutamate by the deamidase Dop, a prerequisite to the subsequent pupylation process.

It participates in protein degradation; proteasomal Pup-dependent pathway. Functionally, protein modifier that is covalently attached to lysine residues of substrate proteins, thereby targeting them for proteasomal degradation. The tagging system is termed pupylation. This Mycolicibacterium vanbaalenii (strain DSM 7251 / JCM 13017 / BCRC 16820 / KCTC 9966 / NRRL B-24157 / PYR-1) (Mycobacterium vanbaalenii) protein is Prokaryotic ubiquitin-like protein Pup.